The chain runs to 78 residues: Translation initiation factor IF-1, chloroplastic (78 aa).

An S1-like domain is found at 1 to 73 (MASNRELIEM…TKGRIIYRLR (73 aa)).

This sequence belongs to the IF-1 family. As to quaternary structure, component of the 30S ribosomal translation pre-initiation complex which assembles on the 30S ribosome in the order IF-2 and IF-3, IF-1 and N-formylmethionyl-tRNA(fMet); mRNA recruitment can occur at any time during PIC assembly.

It is found in the plastid. Its subcellular location is the chloroplast. Its function is as follows. One of the essential components for the initiation of protein synthesis. Stabilizes the binding of IF-2 and IF-3 on the 30S subunit to which N-formylmethionyl-tRNA(fMet) subsequently binds. Helps modulate mRNA selection, yielding the 30S pre-initiation complex (PIC). Upon addition of the 50S ribosomal subunit IF-1, IF-2 and IF-3 are released leaving the mature 70S translation initiation complex. This chain is Translation initiation factor IF-1, chloroplastic, found in Ostreococcus tauri.